The chain runs to 95 residues: Aspartyl/glutamyl-tRNA(Asn/Gln) amidotransferase subunit C (95 aa).

Belongs to the GatC family. As to quaternary structure, heterotrimer of A, B and C subunits.

It carries out the reaction L-glutamyl-tRNA(Gln) + L-glutamine + ATP + H2O = L-glutaminyl-tRNA(Gln) + L-glutamate + ADP + phosphate + H(+). The enzyme catalyses L-aspartyl-tRNA(Asn) + L-glutamine + ATP + H2O = L-asparaginyl-tRNA(Asn) + L-glutamate + ADP + phosphate + 2 H(+). Its function is as follows. Allows the formation of correctly charged Asn-tRNA(Asn) or Gln-tRNA(Gln) through the transamidation of misacylated Asp-tRNA(Asn) or Glu-tRNA(Gln) in organisms which lack either or both of asparaginyl-tRNA or glutaminyl-tRNA synthetases. The reaction takes place in the presence of glutamine and ATP through an activated phospho-Asp-tRNA(Asn) or phospho-Glu-tRNA(Gln). The chain is Aspartyl/glutamyl-tRNA(Asn/Gln) amidotransferase subunit C from Rhizobium etli (strain CIAT 652).